We begin with the raw amino-acid sequence, 77 residues long: Thioredoxin (77 aa).

Active-site nucleophile residues include cysteine 11 and cysteine 14. Cysteine 11 and cysteine 14 are oxidised to a cystine.

It belongs to the glutaredoxin family.

Its function is as follows. Does not function as a glutathione-disulfide oxidoreductase in the presence of glutathione and glutathione reductase. Has low thioredoxin activity in vitro. The sequence is that of Thioredoxin from Methanothermobacter thermautotrophicus (strain ATCC 29096 / DSM 1053 / JCM 10044 / NBRC 100330 / Delta H) (Methanobacterium thermoautotrophicum).